The following is a 226-amino-acid chain: MESFATSDKLFESREFVKGLEELKKRREDGEMTCDLLWRMCRFCHELSTTMSGEQRRKMLIEGRDYGLEAMDLDPSSFLAAKWTAIMFGLVVDQLPTKEKINDGGRLKDMLDKALELDPTDFALLHLRARFSYTIANLSWLERKAASMLYSEVPKATIDDALVDFKAAYNQNADWIENLLFLSKCHLAKKEKQQAREMLNKAIVLPAASSNDAQFVTECKSLLQKC.

Belongs to the FAM82/RMD family. In terms of assembly, interacts with air-2.

It localises to the cytoplasm. It is found in the cytoskeleton. Its subcellular location is the spindle pole. In terms of biological role, acts in chromosome segregation and organization during mitosis. This Caenorhabditis elegans protein is Regulator of microtubule dynamics protein 1 (rmd-1).